Consider the following 72-residue polypeptide: Translation initiation factor IF-1 (72 aa).

Positions M1–K72 constitute an S1-like domain.

It belongs to the IF-1 family. In terms of assembly, component of the 30S ribosomal translation pre-initiation complex which assembles on the 30S ribosome in the order IF-2 and IF-3, IF-1 and N-formylmethionyl-tRNA(fMet); mRNA recruitment can occur at any time during PIC assembly.

It localises to the cytoplasm. Its function is as follows. One of the essential components for the initiation of protein synthesis. Stabilizes the binding of IF-2 and IF-3 on the 30S subunit to which N-formylmethionyl-tRNA(fMet) subsequently binds. Helps modulate mRNA selection, yielding the 30S pre-initiation complex (PIC). Upon addition of the 50S ribosomal subunit IF-1, IF-2 and IF-3 are released leaving the mature 70S translation initiation complex. In Streptococcus suis (strain 05ZYH33), this protein is Translation initiation factor IF-1.